Here is a 148-residue protein sequence, read N- to C-terminus: Snaclec B9 (148 aa).

The N-terminal stretch at 1-24 (MGRFIFVSFGLLVVFLSLSGTGAA) is a signal peptide. Disulfide bonds link Cys-27–Cys-38, Cys-55–Cys-144, and Cys-121–Cys-136. The region spanning 34–145 (YDQHCYKVFD…CRLLGHFVCK (112 aa)) is the C-type lectin domain. N-linked (GlcNAc...) asparagine glycosylation is found at Asn-57 and Asn-60.

Belongs to the snaclec family. In terms of assembly, heterodimer; disulfide-linked. As to expression, expressed by the venom gland.

The protein localises to the secreted. Functionally, interferes with one step of hemostasis (modulation of platelet aggregation, or coagulation cascade, for example). This is Snaclec B9 from Macrovipera lebetinus (Levantine viper).